We begin with the raw amino-acid sequence, 491 residues long: Sucrose transport protein SUC9 (491 aa).

A compositionally biased stretch (basic and acidic residues) spans 1–12 (MSDIQAKEDAAP). Positions 1–26 (MSDIQAKEDAAPVDRQSSSSVVVPDE) are disordered. The Cytoplasmic segment spans residues 1 to 33 (MSDIQAKEDAAPVDRQSSSSVVVPDEPSPLRKM). Position 17 is a phosphoserine (S17). A helical membrane pass occupies residues 34–54 (ISVASIAAGIQFGWALQLSLL). Over 55–68 (TPYVQLLGVPHKWS) the chain is Extracellular. Residues 69 to 89 (SFIWLCGPISGLLVQPTVGYF) form a helical membrane-spanning segment. At 90-101 (SDRCKSRFGRRR) the chain is on the cytoplasmic side. Residues 102 to 122 (PFIATGALLVALAVILIGFAA) form a helical membrane-spanning segment. The Extracellular portion of the chain corresponds to 123–139 (DFGHTMGDKLDEAVKIR). The chain crosses the membrane as a helical span at residues 140–160 (AVGFFVVGFWILDVANNTLQG). At 161 to 181 (PCRAFLGDLAAGDAKKTRTAN) the chain is on the cytoplasmic side. A helical membrane pass occupies residues 182 to 202 (AIFSFFMAVGNVLGYAAGSYT). The Extracellular portion of the chain corresponds to 203–224 (NLHKIFPFTVTKACDIYCANLK). A helical transmembrane segment spans residues 225–245 (SCFIISITLLIVLTIIALWYV). The Cytoplasmic portion of the chain corresponds to 246-277 (EDKQWSPNADSDNEKTPFFGEIFGAFKVMKRP). A helical transmembrane segment spans residues 278–298 (MWMLLAVTALNWIAWFPFLLY). The Extracellular segment spans residues 299–329 (DTDWMGREVYGGDSAGDDKMKKLYNHGIQVG). Residues 330–350 (SLGLMLNSIVLGVMSLVIGVI) form a helical membrane-spanning segment. The Cytoplasmic portion of the chain corresponds to 351-358 (SKKIGAKR). A helical transmembrane segment spans residues 359–379 (LWGAVNIILAVCLAMTVLVTK). Residues 380 to 406 (KAEEHRKIAGRMALPTNAIRDGALSLF) lie on the Extracellular side of the membrane. A helical membrane pass occupies residues 407 to 427 (AILGIPLAITFSIPFALASII). The Cytoplasmic segment spans residues 428 to 443 (SSSSGAGQGLSLGVLN). The chain crosses the membrane as a helical span at residues 444–464 (MAIVIPQMIVSFGVGPIDALF). Topologically, residues 465 to 468 (GGGN) are extracellular. A helical membrane pass occupies residues 469–489 (LPGFVVGAIAALISSVVALTV). The Cytoplasmic segment spans residues 490–491 (LP).

The protein belongs to the glycoside-pentoside-hexuronide (GPH) cation symporter transporter (TC 2.A.2.4) family. In terms of tissue distribution, widely expressed.

The protein resides in the cell membrane. It catalyses the reaction sucrose(out) + H(+)(out) = sucrose(in) + H(+)(in). The protein operates within glycan biosynthesis; sucrose metabolism. With respect to regulation, inhibited by protonophores (e.g. carbonyl cyanide m-chlorophenyl-hydrazone (CCCP)) and SH group inhibitors (e.g. p-chloromercuribenzene sulphonic acid (PCMBS)). High-affinity sucrose transporter. Responsible for the transport of sucrose into the cell, with the concomitant uptake of protons (symport system). Can also transport a wide range of glucosides, such as helicin, salicin, arbutin, maltose, fraxin, esculin, uranose, alpha-methylglucoside, alpha-phenylglucoside and beta-phenylglucoside. Plays a role in flowering time transition delay. This chain is Sucrose transport protein SUC9, found in Arabidopsis thaliana (Mouse-ear cress).